The chain runs to 591 residues: MAGPAPGTIMGEDYFGNASEWGEEADGGQHQEDDSGEGEDDAEVQQECLHKFSTRDYIMEPSIFNTLKRYFQAGGSPENVIQLLSENYTAVAQTVNLLAEWLIQTGVEPVQVQETVENHLKSLLIKHFDPRKADSIFTEEGETPAWLEQMIAHTTWRDLFYKLAEAHPDCLMLNFTVKLISDAGYQGEITSVSTACQQLEVFSRVLRTSLATILDGGEENLEKNLPEFAKMVCHGEHTYLFAQAMMSVLAQEEQGGSAVRRVAQEVQRFAQEKGHDASQITLALGTAASYPRACQALGAMLSRGALNPADITVLFKMFTSMDPPPVELIRVPAFLDLFMQSLFKPGAKINQDHKHKYIHILAYAASVVETWKKNKRVSIGKDELKSTSKAIETVHNLCCNENKGASELVAELSTLYQCIRFPVVAMGVLKWVDWTVSEPRYFQLQTDHTPVHLALLDEISTCHQLLHPQVLQLLVKLFETEHSQLDVMEQLELKKTLLDRMVHLLSRGYVLPVVSYIRKCLEKLDTDISLIRYFVTEVLDVIAPPYTSDFVQLFLPILENDSIAGTIKAEGEHDPVTEFIAHCKSNFIVVN.

Residues 1–44 (MAGPAPGTIMGEDYFGNASEWGEEADGGQHQEDDSGEGEDDAEV) form a disordered region. Residues 34 to 44 (DSGEGEDDAEV) are compositionally biased toward acidic residues.

Belongs to the NELF-D family. In terms of assembly, the NELF complex is composed of NELFA, NELFB, NELFCD and NELFE; NELFA and NELFCD form a stable subcomplex that binds primarily through NELFCD to the N-terminus of NELFB. Binds RNA which may help to stabilize the NELF complex on nucleic acid. In vitro, the NELFA:NELFCD subcomplex binds to ssDNA and ssRNA in a sequence- and structure-dependent manner. Interacts with ARAF1. Interacts with PCF11. Interacts with NELFB. Interacts with KAT8.

Its subcellular location is the nucleus. Essential component of the NELF complex, a complex that negatively regulates the elongation of transcription by RNA polymerase II. The NELF complex, which acts via an association with the DSIF complex and causes transcriptional pausing, is counteracted by the P-TEFb kinase complex. The polypeptide is Negative elongation factor D (Nelfcd) (Mus musculus (Mouse)).